The sequence spans 348 residues: D-alanine--D-alanine ligase (348 aa).

Residues 132–334 (KRVLESIGIP…YPDLIEELVT (203 aa)) form the ATP-grasp domain. Residue 162–217 (LARLTFPIFVKPANMGSSVGISKAQTKVELRKAIQLALTYDSRVLIEQGVVAREIE) coordinates ATP. 3 residues coordinate Mg(2+): Asp288, Glu301, and Asn303.

Belongs to the D-alanine--D-alanine ligase family. Requires Mg(2+) as cofactor. Mn(2+) is required as a cofactor.

Its subcellular location is the cytoplasm. The enzyme catalyses 2 D-alanine + ATP = D-alanyl-D-alanine + ADP + phosphate + H(+). It functions in the pathway cell wall biogenesis; peptidoglycan biosynthesis. Cell wall formation. The chain is D-alanine--D-alanine ligase from Streptococcus pyogenes serotype M3 (strain SSI-1).